Reading from the N-terminus, the 346-residue chain is Uroporphyrinogen decarboxylase (346 aa).

Residues 23 to 27, aspartate 72, tyrosine 155, serine 209, and histidine 322 contribute to the substrate site; that span reads RQAGR.

The protein belongs to the uroporphyrinogen decarboxylase family. As to quaternary structure, homodimer.

The protein localises to the cytoplasm. It carries out the reaction uroporphyrinogen III + 4 H(+) = coproporphyrinogen III + 4 CO2. The protein operates within porphyrin-containing compound metabolism; protoporphyrin-IX biosynthesis; coproporphyrinogen-III from 5-aminolevulinate: step 4/4. Its function is as follows. Catalyzes the decarboxylation of four acetate groups of uroporphyrinogen-III to yield coproporphyrinogen-III. The protein is Uroporphyrinogen decarboxylase of Anaeromyxobacter dehalogenans (strain 2CP-C).